A 428-amino-acid polypeptide reads, in one-letter code: Histone deacetylase 3 (428 aa).

Residues lysine 3–glutamate 316 are histone deacetylase. 3 residues coordinate 1D-myo-inositol 1,4,5,6-tetrakisphosphate: histidine 17, glycine 21, and lysine 25. Histidine 135 is a catalytic residue. Zn(2+) contacts are provided by aspartate 170, histidine 172, and aspartate 259. Residue arginine 265 coordinates 1D-myo-inositol 1,4,5,6-tetrakisphosphate. Composition is skewed to basic and acidic residues over residues aspartate 388 to serine 405 and aspartate 415 to isoleucine 428. Positions aspartate 388–isoleucine 428 are disordered. Position 424 is a phosphoserine (serine 424).

It belongs to the histone deacetylase family. HD type 1 subfamily. Interacts with HDAC7 and HDAC9. Interacts with DAXX, KDM4A, HDAC10 and DACH1. Found in a complex with NCOR1 and NCOR2. Component of the N-Cor repressor complex, at least composed of NCOR1, NCOR2, HDAC3, TBL1X, TBL1R, CORO2A and GPS2. Interacts with BCOR, MJD2A/JHDM3A, NRIP1, PRDM6 and SRY. Interacts with BTBD14B. Interacts with GLIS2. Interacts (via the DNA-binding domain) with NR2C1; the interaction recruits phosphorylated NR2C1 to PML bodies for sumoylation. Component of the Notch corepressor complex. Interacts with CBFA2T3 and NKAP. Interacts with APEX1; the interaction is not dependent on the acetylated status of APEX1. Interacts with ZMYND15. Interacts with SMRT/NCOR2 and BCL6 on DNA enhancer elements. Interacts with INSM1. Interacts with XBP1 isoform 1; the interaction occurs in endothelial cell (EC) under disturbed flow. Interacts (via C-terminus) with CCAR2 (via N-terminus). Interacts with and deacetylates MEF2D. Interacts with BEND3. Interacts with NKAPL. Interacts with DHX36; this interaction occurs in a RNA-dependent manner. Interacts weakly with CRY1; this interaction is enhanced in the presence of FBXL3. Interacts with FBXL3 and BMAL1. Interacts with NCOR1. Interacts with RARA. Interacts with SETD5. Sumoylated in vitro. In terms of processing, deubiquitinated on 'Lys-63'-linked ubiquitin chains by USP38; leading to a decreased level of histone acetylation.

Its subcellular location is the nucleus. The protein resides in the chromosome. The protein localises to the cytoplasm. It is found in the cytosol. The catalysed reaction is N(6)-acetyl-L-lysyl-[histone] + H2O = L-lysyl-[histone] + acetate. It catalyses the reaction N(6)-acetyl-L-lysyl-[protein] + H2O = L-lysyl-[protein] + acetate. The enzyme catalyses N(6)-(2E)-butenoyl-L-lysyl-[protein] + H2O = (2E)-2-butenoate + L-lysyl-[protein]. It carries out the reaction N(6)-(2-hydroxyisobutanoyl)-L-lysyl-[protein] + H2O = 2-hydroxy-2-methylpropanoate + L-lysyl-[protein]. The catalysed reaction is N(6)-[(S)-lactoyl]-L-lysyl-[protein] + H2O = (S)-lactate + L-lysyl-[protein]. With respect to regulation, inositol tetraphosphate (1D-myo-inositol 1,4,5,6-tetrakisphosphate) promotes the histone deacetylase activity by acting as an intermolecular glue between HDAC3 and NCOR2, thereby promoting its association with the N-Cor complex, a prerequisite for the histone deacetylase activity. In terms of biological role, histone deacetylase that catalyzes the deacetylation of lysine residues on the N-terminal part of the core histones (H2A, H2B, H3 and H4), and some other non-histone substrates. Histone deacetylation gives a tag for epigenetic repression and plays an important role in transcriptional regulation, cell cycle progression and developmental events. Histone deacetylases act via the formation of large multiprotein complexes, such as N-Cor repressor complex, which activate the histone deacetylase activity. Participates in the BCL6 transcriptional repressor activity by deacetylating the H3 'Lys-27' (H3K27) on enhancer elements, antagonizing EP300 acetyltransferase activity and repressing proximal gene expression. Acts as a molecular chaperone for shuttling phosphorylated NR2C1 to PML bodies for sumoylation. Contributes, together with XBP1 isoform 1, to the activation of NFE2L2-mediated HMOX1 transcription factor gene expression in a PI(3)K/mTORC2/Akt-dependent signaling pathway leading to endothelial cell (EC) survival under disturbed flow/oxidative stress. Regulates both the transcriptional activation and repression phases of the circadian clock in a deacetylase activity-independent manner. During the activation phase, promotes the accumulation of ubiquitinated BMAL1 at the E-boxes and during the repression phase, blocks FBXL3-mediated CRY1/2 ubiquitination and promotes the interaction of CRY1 and BMAL1. The NCOR1-HDAC3 complex regulates the circadian expression of the core clock gene BMAL1 and the genes involved in lipid metabolism in the liver. Also functions as deacetylase for non-histone targets, such as KAT5, MEF2D, MAPK14, RARA and STAT3. Serves as a corepressor of RARA, mediating its deacetylation and repression, leading to inhibition of RARE DNA element binding. In addition to protein deacetylase activity, also acts as a protein-lysine deacylase by recognizing other acyl groups: catalyzes removal of (2E)-butenoyl (crotonyl), lactoyl (lactyl) and 2-hydroxyisobutanoyl (2-hydroxyisobutyryl) acyl groups from lysine residues, leading to protein decrotonylation, delactylation and de-2-hydroxyisobutyrylation, respectively. Catalyzes decrotonylation of MAPRE1/EB1. Mediates delactylation NBN/NBS1, thereby inhibiting DNA double-strand breaks (DSBs) via homologous recombination (HR). This chain is Histone deacetylase 3, found in Mus musculus (Mouse).